Consider the following 75-residue polypeptide: UPF0154 protein MMOB4450 (75 aa).

Residues 7-27 (IGLIVGLSILFTIVGLVVGFF) traverse the membrane as a helical segment.

It belongs to the UPF0154 family.

Its subcellular location is the cell membrane. The protein is UPF0154 protein MMOB4450 of Mycoplasma mobile (strain ATCC 43663 / 163K / NCTC 11711) (Mesomycoplasma mobile).